Reading from the N-terminus, the 157-residue chain is Protein Smg homolog (157 aa).

The protein belongs to the Smg family.

The polypeptide is Protein Smg homolog (Shewanella woodyi (strain ATCC 51908 / MS32)).